A 106-amino-acid polypeptide reads, in one-letter code: Small ribosomal subunit protein uS10 (106 aa).

Belongs to the universal ribosomal protein uS10 family. In terms of assembly, part of the 30S ribosomal subunit.

Involved in the binding of tRNA to the ribosomes. The sequence is that of Small ribosomal subunit protein uS10 from Prochlorococcus marinus (strain MIT 9312).